The following is a 508-amino-acid chain: Potassium/proton antiporter CemA (508 aa).

The next 5 membrane-spanning stretches (helical) occupy residues 66–86 (LFIIYWSLLEYRISLCFLNLL), 282–302 (YQALASIQYIGCLIFLPWIIS), 386–406 (ILHLLTGMICFTTLGALFILG), 433–453 (ILLLTDLCIGFHSPHGWEVVI), and 468–488 (IISCFVSTFPVILDTVSKYWI).

The protein belongs to the CemA family.

The protein resides in the plastid. The protein localises to the chloroplast inner membrane. It catalyses the reaction K(+)(in) + H(+)(out) = K(+)(out) + H(+)(in). Its function is as follows. Contributes to K(+)/H(+) antiport activity by supporting proton efflux to control proton extrusion and homeostasis in chloroplasts in a light-dependent manner to modulate photosynthesis. Prevents excessive induction of non-photochemical quenching (NPQ) under continuous-light conditions. Indirectly promotes efficient inorganic carbon uptake into chloroplasts. The chain is Potassium/proton antiporter CemA from Anthoceros angustus (Hornwort).